The chain runs to 416 residues: S-layer protein B (416 aa).

The first 20 residues, methionine 1–alanine 20, serve as a signal peptide directing secretion. Residues isoleucine 310–threonine 330 adopt a coiled-coil conformation. A helical membrane pass occupies residues isoleucine 392–phenylalanine 412.

The protein belongs to the Sulfolobales SlaB family. In terms of assembly, the mushroom-shaped unit cells of the Sulfolobales' S-layers may consist of three SlaB subunits and six SlaA subunits.

It is found in the secreted. Its subcellular location is the cell wall. The protein resides in the S-layer. The protein localises to the cell membrane. S-layer small protein. May anchor the complex to the cell membrane. This Metallosphaera sedula (strain ATCC 51363 / DSM 5348 / JCM 9185 / NBRC 15509 / TH2) protein is S-layer protein B.